Here is a 279-residue protein sequence, read N- to C-terminus: MKIENKEIASNWFTDLRDLLCKEFEKIEEEYAQTKGLKPAKFVRTSWQRNGGGGGIMSLMKGEVFEKVGVNISTVFGEFSPEFRSEIPGAELDGKFFATGISLVAHLKSPLIPAMHFNTRYIETSKSWFGGGGDLTPFYPKENETAKFHAAFKEACDKYDSSYYPKFKKQCDEYFYLKHRKEPRGVGGIFYDYLNSGNFEQDFAFTQDVGRALLSVYPEIVRSKLFLPWTTEQKEYQLIRRGRYVEFNLLYDRGTKFGLMTDGNVEAILMSLPPEVKFN.

Position 102 (serine 102) interacts with substrate. A divalent metal cation is bound by residues histidine 106 and histidine 116. Catalysis depends on histidine 116, which acts as the Proton donor. Residue 118 to 120 (NTR) coordinates substrate. The a divalent metal cation site is built by histidine 149 and histidine 179. An important for dimerization region spans residues 244–279 (YVEFNLLYDRGTKFGLMTDGNVEAILMSLPPEVKFN).

The protein belongs to the aerobic coproporphyrinogen-III oxidase family. As to quaternary structure, homodimer. A divalent metal cation is required as a cofactor.

Its subcellular location is the cytoplasm. It carries out the reaction coproporphyrinogen III + O2 + 2 H(+) = protoporphyrinogen IX + 2 CO2 + 2 H2O. Its pathway is porphyrin-containing compound metabolism; protoporphyrin-IX biosynthesis; protoporphyrinogen-IX from coproporphyrinogen-III (O2 route): step 1/1. Its function is as follows. Involved in the heme biosynthesis. Catalyzes the aerobic oxidative decarboxylation of propionate groups of rings A and B of coproporphyrinogen-III to yield the vinyl groups in protoporphyrinogen-IX. The sequence is that of Oxygen-dependent coproporphyrinogen-III oxidase from Rickettsia felis (strain ATCC VR-1525 / URRWXCal2) (Rickettsia azadi).